We begin with the raw amino-acid sequence, 118 residues long: uncharacterized protein (118 aa).

The segment at 1–49 (MDYVGGSLKLKNVKKKPLKKKKKDSKKLAEKVQEHSSRDKSPLEENGVS) is disordered. The segment covering 11 to 25 (KNVKKKPLKKKKKDS) has biased composition (basic residues). The segment covering 26 to 43 (KKLAEKVQEHSSRDKSPL) has biased composition (basic and acidic residues).

This is an uncharacterized protein from Schizosaccharomyces pombe (strain 972 / ATCC 24843) (Fission yeast).